Consider the following 285-residue polypeptide: Bifunctional protein FolD (285 aa).

NADP(+)-binding positions include 166–168 (GAS) and Ile232.

Belongs to the tetrahydrofolate dehydrogenase/cyclohydrolase family. In terms of assembly, homodimer.

It carries out the reaction (6R)-5,10-methylene-5,6,7,8-tetrahydrofolate + NADP(+) = (6R)-5,10-methenyltetrahydrofolate + NADPH. The enzyme catalyses (6R)-5,10-methenyltetrahydrofolate + H2O = (6R)-10-formyltetrahydrofolate + H(+). It participates in one-carbon metabolism; tetrahydrofolate interconversion. In terms of biological role, catalyzes the oxidation of 5,10-methylenetetrahydrofolate to 5,10-methenyltetrahydrofolate and then the hydrolysis of 5,10-methenyltetrahydrofolate to 10-formyltetrahydrofolate. The chain is Bifunctional protein FolD from Aliivibrio salmonicida (strain LFI1238) (Vibrio salmonicida (strain LFI1238)).